The primary structure comprises 254 residues: Very-long-chain (3R)-3-hydroxyacyl-CoA dehydratase 2 (254 aa).

Low complexity predominate over residues 1–10 (MAAAAATAAT). The segment at 1–34 (MAAAAATAATKGNGGGSGRVGAGDSSGARKKKGP) is disordered. An N-acetylalanine modification is found at alanine 2. Residues 2-41 (AAAAATAATKGNGGGSGRVGAGDSSGARKKKGPGPVATAY) are Cytoplasmic-facing. Positions 12–21 (GNGGGSGRVG) are enriched in gly residues. A helical membrane pass occupies residues 42–60 (LVIYNVVMTAGWLVIAVGL). Over 61–79 (VRAYLAKGSYHSLYYSIER) the chain is Lumenal. A helical transmembrane segment spans residues 80–97 (PLKFFQTGALLEILHCAI). At 98-107 (GIVPSSVVLT) the chain is on the cytoplasmic side. A helical membrane pass occupies residues 108-125 (SFQVMSRVFLIWAVTHSV). The Lumenal portion of the chain corresponds to 126 to 130 (KEVQS). Residues 131–146 (EDSVLLFVIAWTITEI) traverse the membrane as a helical segment. The Cytoplasmic portion of the chain corresponds to 147 to 169 (IRYSFYTFSLLNHLPYIIKWARY). The chain crosses the membrane as a helical span at residues 170–187 (TLFIVLYPMGVTGELLTI). Active-site residues include tyrosine 176 and glutamate 183. Residues 188 to 217 (YAALPFVRQAGLYSISLPNKYNFSFDYHAF) are Lumenal-facing. The segment at 198 to 214 (GLYSISLPNKYNFSFDY) is may be involved in interaction with TECR. The N-linked (GlcNAc...) asparagine glycan is linked to asparagine 209. A helical transmembrane segment spans residues 218-235 (LILIMISYIPLFPQLYFH). Topologically, residues 236–254 (MIHQRRKVLSHTEEHKKFE) are cytoplasmic.

This sequence belongs to the very long-chain fatty acids dehydratase HACD family. As to quaternary structure, may interact with enzymes of the ELO family (including ELOVL1); with those enzymes that mediate condensation, the first of the four steps of the reaction cycle responsible for fatty acids elongation, may be part of a larger fatty acids elongase complex. Interacts with BCAP31. Interacts with TECR.

It localises to the endoplasmic reticulum membrane. It catalyses the reaction a very-long-chain (3R)-3-hydroxyacyl-CoA = a very-long-chain (2E)-enoyl-CoA + H2O. It carries out the reaction (3R)-hydroxyhexadecanoyl-CoA = (2E)-hexadecenoyl-CoA + H2O. The catalysed reaction is (3R)-hydroxyoctadecanoyl-CoA = (2E)-octadecenoyl-CoA + H2O. The enzyme catalyses (3R)-hydroxyeicosanoyl-CoA = (2E)-eicosenoyl-CoA + H2O. It catalyses the reaction (3R)-hydroxydocosanoyl-CoA = (2E)-docosenoyl-CoA + H2O. It carries out the reaction (3R)-hydroxytetracosanoyl-CoA = (2E)-tetracosenoyl-CoA + H2O. The catalysed reaction is (3R)-hydroxyhexacosanoyl-CoA = (2E)-hexacosenoyl-CoA + H2O. The protein operates within lipid metabolism; fatty acid biosynthesis. Its function is as follows. Catalyzes the third of the very long-chain fatty acids (VLCFA) elongation four-step cycle (condensation, reduction, dehydration, and reduction). This endoplasmic reticulum-elongation process is characterized by the addition of two carbons to the lipid chain through each cycle. This enzyme catalyzes the dehydration of the 3-hydroxyacyl-CoA intermediate into trans-2,3-enoyl-CoA, within each cycle of elongation. Therefore, it participates in the production of various VLCFAs involved in multiple biological processes as precursors of membrane lipids and lipid mediators. This is Very-long-chain (3R)-3-hydroxyacyl-CoA dehydratase 2 from Mus musculus (Mouse).